Consider the following 129-residue polypeptide: Iron-sulfur cluster assembly 1 homolog, mitochondrial (129 aa).

A mitochondrion-targeting transit peptide spans 1–12 (MSASLVRATVRA). Residues Cys-57, Cys-121, and Cys-123 each contribute to the Fe cation site.

It belongs to the HesB/IscA family. Interacts with CRY2, but not with CRY1 (in vitro).

It localises to the mitochondrion. In terms of biological role, involved in the maturation of mitochondrial 4Fe-4S proteins functioning late in the iron-sulfur cluster assembly pathway. Probably involved in the binding of an intermediate of Fe/S cluster assembly. The protein is Iron-sulfur cluster assembly 1 homolog, mitochondrial (Isca1) of Mus musculus (Mouse).